Consider the following 298-residue polypeptide: GSKCPFSDDTVAMVIVTRENRNRDFYTLQTLRNHDEFKKKAITRPVVFITHGFTSSATVESFVDLQTAILEXXXXKVTVSDWRVAACNRTTGLLYYVTAVSNTRLVGRYIATVTKKLVTDYNVSMADIRLIGHSLGAHVSGFAGKEVQKLKLEKYSEIIGLDPAGPSFESNDCAERLCKTDAHYVQIIHTSKKFGIEKSIGHVDFYVNQGNNQPGCGIIPLKDVCSHSRAITYMTECIKRECCLIGIPQSKSSKSISSCTRQECVCVGLKAKSYPNTGSFYVPVESTAPFCNNKGKII.

The cysteines at positions 4 and 87 are disulfide-linked. 2 N-linked (GlcNAc...) asparagine glycosylation sites follow: asparagine 88 and asparagine 122. Serine 134 serves as the catalytic Nucleophile. Aspartate 162 (charge relay system) is an active-site residue. Cystine bridges form between cysteine 173–cysteine 178 and cysteine 216–cysteine 225. The active-site Charge relay system is the histidine 227. 3 cysteine pairs are disulfide-bonded: cysteine 242/cysteine 266, cysteine 243/cysteine 291, and cysteine 259/cysteine 264.

Belongs to the AB hydrolase superfamily. Lipase family. Expressed by the venom gland.

The protein localises to the secreted. The catalysed reaction is a 1,2-diacyl-sn-glycero-3-phosphocholine + H2O = a 2-acyl-sn-glycero-3-phosphocholine + a fatty acid + H(+). Its function is as follows. Catalyzes the hydrolysis of phosphatidylcholine with phospholipase A1 activity. May act as an allergen and induce hemolytic activity. The chain is Phospholipase A1 from Vespula squamosa (Southern yellow jacket).